Reading from the N-terminus, the 652-residue chain is Probable protein phosphatase 2C 19 (652 aa).

Positions 265–517 (KYVVSSMQGW…DNTTVILVLF (253 aa)) constitute a PPM-type phosphatase domain. Positions 300, 301, 467, and 508 each coordinate Mn(2+). Positions 524–567 (AVPPVDTDTDTDSHTGDDVDNNDPANEVDPTANAGSDDSNTSDE) are disordered.

This sequence belongs to the PP2C family. It depends on Mg(2+) as a cofactor. Mn(2+) serves as cofactor.

It catalyses the reaction O-phospho-L-seryl-[protein] + H2O = L-seryl-[protein] + phosphate. The catalysed reaction is O-phospho-L-threonyl-[protein] + H2O = L-threonyl-[protein] + phosphate. The polypeptide is Probable protein phosphatase 2C 19 (Oryza sativa subsp. japonica (Rice)).